A 203-amino-acid polypeptide reads, in one-letter code: Small ribosomal subunit protein uS5 (203 aa).

The S5 DRBM domain occupies Leu-51–Ile-114.

This sequence belongs to the universal ribosomal protein uS5 family. In terms of assembly, part of the 30S ribosomal subunit. Contacts protein S4.

Functionally, with S4 and S12 plays an important role in translational accuracy. This Methanothrix thermoacetophila (strain DSM 6194 / JCM 14653 / NBRC 101360 / PT) (Methanosaeta thermophila) protein is Small ribosomal subunit protein uS5.